The primary structure comprises 1074 residues: Phospholipase D1 (1074 aa).

The PX domain maps to Ile-81–Ser-212. The 110-residue stretch at Pro-219–Arg-328 folds into the PH domain. 2 S-palmitoyl cysteine lipidation sites follow: Cys-240 and Cys-241. Residues Tyr-459–Arg-486 form the PLD phosphodiesterase 1 domain. A catalytic region spans residues His-463 to Ala-928. Residues Ser-499, Ser-561, and Ser-629 each carry the phosphoserine modification. Residues Glu-891–Ser-918 form the PLD phosphodiesterase 2 domain.

Belongs to the phospholipase D family. As to quaternary structure, interacts with PIP5K1B. In terms of tissue distribution, expressed in kidney, lung, and at a much lower levels, in brain, liver, heart, testis and spleen.

The protein resides in the cytoplasm. It is found in the perinuclear region. It localises to the endoplasmic reticulum membrane. The protein localises to the golgi apparatus membrane. Its subcellular location is the late endosome membrane. It carries out the reaction a 1,2-diacyl-sn-glycero-3-phosphocholine + H2O = a 1,2-diacyl-sn-glycero-3-phosphate + choline + H(+). It catalyses the reaction ethanol + a 1,2-diacyl-sn-glycero-3-phosphocholine = 1,2-diacyl-sn-glycero-3-phosphoethanol + choline. The catalysed reaction is 1,2-dihexadecanoyl-sn-glycero-3-phosphocholine + H2O = 1,2-dihexadecanoyl-sn-glycero-3-phosphate + choline + H(+). With respect to regulation, stimulated by phosphatidylinositol 4,5-bisphosphate and phosphatidylinositol 3,4,5-trisphosphate, activated by the phosphokinase C-alpha, by the ADP-ribosylation factor-1 (ARF-1), and to a lesser extent by GTP-binding proteins: RHO A, RAC-1 and CDC42. Inhibited by oleate. In terms of biological role, function as phospholipase selectivefor phosphatidylcholine. Implicated as a critical step in numerous cellular pathways, including signal transduction, membrane trafficking, and the regulation of mitosis. May be involved in the regulation of perinuclear intravesicular membrane traffic. This chain is Phospholipase D1, found in Mus musculus (Mouse).